The following is a 331-amino-acid chain: Thioredoxin-like fold domain-containing protein MRL7, chloroplastic (331 aa).

The N-terminal 59 residues, 1–59, are a transit peptide targeting the chloroplast; sequence MSFFAVACSAPRSSMLLTGLNSSFSDMHRSPLFVFPVTISSRSVKRFAAVSSDSVLDPE. Disordered stretches follow at residues 52–105 and 141–160; these read SDSV…ADAV and GVDEEEEEEEEMVVEEEDPD. The span at 142–160 shows a compositional bias: acidic residues; it reads VDEEEEEEEEMVVEEEDPD.

Component of the transcriptionally active chromosome (TAC) complexes. Interacts with FSD2 and PRDA1. Interacts with FSD3 and CITRX/TRXZ. Binds to PTAC12/HMR/PAP5. Expressed in leaves, shoots, stems, cauline leaves, flower buds, flowers and siliques.

The protein localises to the plastid. It is found in the chloroplast. Its subcellular location is the chloroplast stroma. The protein resides in the chloroplast nucleoid. It localises to the nucleus. In terms of biological role, plays an essential role in early steps of chloroplast development. Involved in the regulation of plastid gene expression. May positively regulate plastid-encoded RNA polymerase (PEP) activity through binding to FSD3 and CITRX/TRXZ. Involved in redox-mediated regulation of chloroplast development. Possesses disulfide reductase activity in vitro. Required for the proper function of the plastid transcriptional machinery and protein accumulation in thylakoid membranes. May function as molecular chaperone to ensure proper organization of the nucleoids in chloroplasts. May mediate some aspect of thylakoid structure or function that controls non-photochemical quenching (NPQ). Participates in the early light signaling events of photobody biogenesis in chloroplasts. May mediate the degradation of two repressors of chloroplast biogenesis, PIF1 and PIF3 in nucleus. Collaboratively with PTAC12/HMR/PAP5, involved in the regulation of thermoresponsive responses via the stabilization of PIF4 in the daytime to initiate thermomorphogenesis. This chain is Thioredoxin-like fold domain-containing protein MRL7, chloroplastic, found in Arabidopsis thaliana (Mouse-ear cress).